Reading from the N-terminus, the 312-residue chain is Cytochrome f (312 aa).

A signal peptide spans methionine 1 to alanine 30. Heme-binding residues include tyrosine 31, cysteine 51, cysteine 54, and histidine 55. Residues valine 278–lysine 298 traverse the membrane as a helical segment.

Belongs to the cytochrome f family. As to quaternary structure, the 4 large subunits of the cytochrome b6-f complex are cytochrome b6, subunit IV (17 kDa polypeptide, petD), cytochrome f and the Rieske protein, while the 4 small subunits are PetG, PetL, PetM and PetN. The complex functions as a dimer. The cofactor is heme.

It is found in the plastid. Its subcellular location is the chloroplast thylakoid membrane. Its function is as follows. Component of the cytochrome b6-f complex, which mediates electron transfer between photosystem II (PSII) and photosystem I (PSI), cyclic electron flow around PSI, and state transitions. The chain is Cytochrome f (petA) from Bigelowiella natans (Pedinomonas minutissima).